Consider the following 140-residue polypeptide: MSVSTSSKNTLLSSIISGILSLVIFATLRFCADWFNGSQLNVLVGGYLFSWLFILSLTCVSNAEMLIFGPDFQAKLVPEILFCLSLTVAAAGIVHRVCATTSVLFSLVGLYFLNRISIKYYSTSVVPVDAPARKTAKKFK.

4 consecutive transmembrane segments (helical) span residues 11–31 (LLSS…LRFC), 40–60 (LNVL…LTCV), 74–94 (AKLV…AGIV), and 98–118 (CATT…RISI).

Belongs to the KRTCAP2 family. Component of the oligosaccharyltransferase (OST) complex.

The protein resides in the membrane. Functionally, subunit of the oligosaccharyl transferase (OST) complex that catalyzes the initial transfer of a defined glycan (Glc(3)Man(9)GlcNAc(2) in eukaryotes) from the lipid carrier dolichol-pyrophosphate to an asparagine residue within an Asn-X-Ser/Thr consensus motif in nascent polypeptide chains, the first step in protein N-glycosylation. N-glycosylation occurs cotranslationally and the complex associates with the Sec61 complex at the channel-forming translocon complex that mediates protein translocation across the endoplasmic reticulum (ER). All subunits are required for a maximal enzyme activity. This chain is Protein KRTCAP2 homolog, found in Drosophila pseudoobscura pseudoobscura (Fruit fly).